The following is a 366-amino-acid chain: Tyrosine--tRNA ligase (366 aa).

Residues Tyr41, Tyr167, Gln171, Asp174, and Gln189 each coordinate L-tyrosine. The short motif at 241-245 (KMSKS) is the 'KMSKS' region element. Lys244 lines the ATP pocket.

Belongs to the class-I aminoacyl-tRNA synthetase family. TyrS type 4 subfamily. In terms of assembly, homodimer.

Its subcellular location is the cytoplasm. The catalysed reaction is tRNA(Tyr) + L-tyrosine + ATP = L-tyrosyl-tRNA(Tyr) + AMP + diphosphate + H(+). Functionally, catalyzes the attachment of tyrosine to tRNA(Tyr) in a two-step reaction: tyrosine is first activated by ATP to form Tyr-AMP and then transferred to the acceptor end of tRNA(Tyr). This chain is Tyrosine--tRNA ligase, found in Saccharolobus solfataricus (strain ATCC 35092 / DSM 1617 / JCM 11322 / P2) (Sulfolobus solfataricus).